Consider the following 216-residue polypeptide: Flavin-dependent thymidylate synthase (216 aa).

A ThyX domain is found at 9–206; that stretch reads GFVELVDVMG…PWTYEAFIKY (198 aa). FAD is bound by residues Ser-55, 78–80, and Glu-86; that span reads RHR. Residues 75–78, 86–90, and Arg-145 each bind dUMP; these read QWFR and ELSGR. A ThyX motif motif is present at residues 78 to 88; the sequence is RHRIASYNELS. Residues 161 to 163 and Asn-167 contribute to the FAD site; that span reads NAR. Arg-172 contributes to the dUMP binding site. The active-site Involved in ionization of N3 of dUMP, leading to its activation is Arg-172.

It belongs to the thymidylate synthase ThyX family. In terms of assembly, homotetramer. FAD is required as a cofactor.

It carries out the reaction dUMP + (6R)-5,10-methylene-5,6,7,8-tetrahydrofolate + NADPH + H(+) = dTMP + (6S)-5,6,7,8-tetrahydrofolate + NADP(+). Its pathway is pyrimidine metabolism; dTTP biosynthesis. Functionally, catalyzes the reductive methylation of 2'-deoxyuridine-5'-monophosphate (dUMP) to 2'-deoxythymidine-5'-monophosphate (dTMP) while utilizing 5,10-methylenetetrahydrofolate (mTHF) as the methyl donor, and NADPH and FADH(2) as the reductant. The protein is Flavin-dependent thymidylate synthase of Thermotoga neapolitana (strain ATCC 49049 / DSM 4359 / NBRC 107923 / NS-E).